The chain runs to 333 residues: Phosphate acyltransferase (333 aa).

The protein belongs to the PlsX family. As to quaternary structure, homodimer. Probably interacts with PlsY.

The protein resides in the cytoplasm. The enzyme catalyses a fatty acyl-[ACP] + phosphate = an acyl phosphate + holo-[ACP]. It functions in the pathway lipid metabolism; phospholipid metabolism. Its function is as follows. Catalyzes the reversible formation of acyl-phosphate (acyl-PO(4)) from acyl-[acyl-carrier-protein] (acyl-ACP). This enzyme utilizes acyl-ACP as fatty acyl donor, but not acyl-CoA. In Bacillus subtilis (strain 168), this protein is Phosphate acyltransferase.